Here is a 206-residue protein sequence, read N- to C-terminus: Protease (206 aa).

Active-site residues include His-55, Asp-72, and Cys-122.

It belongs to the peptidase C5 family. As to quaternary structure, interacts with protease cofactor pVI-C; this interaction is necessary for protease activation.

It localises to the virion. The protein localises to the host nucleus. The catalysed reaction is Cleaves proteins of the adenovirus and its host cell at two consensus sites: -Yaa-Xaa-Gly-Gly-|-Xaa- and -Yaa-Xaa-Gly-Xaa-|-Gly- (in which Yaa is Met, Ile or Leu, and Xaa is any amino acid).. Requires DNA and protease cofactor for maximal activation. Inside nascent virions, becomes partially activated by binding to the viral DNA, allowing it to cleave the cofactor that binds to the protease and fully activates it. Actin, like the viral protease cofactor, seems to act as a cofactor in the cleavage of cytokeratin 18 and of actin itself. Functionally, cleaves viral precursor proteins (pTP, pIIIa, pVI, pVII, pVIII, and pX) inside newly assembled particles giving rise to mature virions. Protease complexed to its cofactor slides along the viral DNA to specifically locate and cleave the viral precursors. Mature virions have a weakened organization compared to the unmature virions, thereby facilitating subsequent uncoating. Without maturation, the particle lacks infectivity and is unable to uncoat. Late in adenovirus infection, in the cytoplasm, may participate in the cytoskeleton destruction. Cleaves host cell cytoskeletal keratins K7 and K18. The sequence is that of Protease from Fowl adenovirus A serotype 1 (strain CELO / Phelps) (FAdV-1).